The sequence spans 521 residues: Fucosyltransferase 3 (521 aa).

Residues 1-12 (MKRGKKNSDAGD) show a composition bias toward basic and acidic residues. The tract at residues 1–29 (MKRGKKNSDAGDRLTNSDTRTGSSELNAM) is disordered. Over 1-39 (MKRGKKNSDAGDRLTNSDTRTGSSELNAMMKPSLSSMKT) the chain is Cytoplasmic. Positions 14-26 (LTNSDTRTGSSEL) are enriched in polar residues. Residues 40-60 (MGLLLAVLMVASVMFSLSVVL) traverse the membrane as a helical; Signal-anchor for type II membrane protein segment. The Lumenal segment spans residues 61 to 521 (RDPPSDDVIE…QATLFHGCKD (461 aa)). N-linked (GlcNAc...) asparagine glycans are attached at residues N152, N222, and N493.

This sequence belongs to the glycosyltransferase 37 family. As to expression, expressed in roots, stems, leaves, flowers, siliques and seedlings.

Its subcellular location is the golgi apparatus. It localises to the golgi stack membrane. Its pathway is protein modification; protein glycosylation. May be involved in cell wall biosynthesis. May act as a fucosyltransferase. The sequence is that of Fucosyltransferase 3 (FUT3) from Arabidopsis thaliana (Mouse-ear cress).